The chain runs to 357 residues: Peptide chain release factor 1 (357 aa).

Residue Gln234 is modified to N5-methylglutamine.

This sequence belongs to the prokaryotic/mitochondrial release factor family. Methylated by PrmC. Methylation increases the termination efficiency of RF1.

It localises to the cytoplasm. Its function is as follows. Peptide chain release factor 1 directs the termination of translation in response to the peptide chain termination codons UAG and UAA. The polypeptide is Peptide chain release factor 1 (Lactococcus lactis subsp. cremoris (strain MG1363)).